The primary structure comprises 250 residues: Ubiquinone/menaquinone biosynthesis C-methyltransferase UbiE (250 aa).

S-adenosyl-L-methionine contacts are provided by residues threonine 73, aspartate 94, and 122-123; that span reads DA.

It belongs to the class I-like SAM-binding methyltransferase superfamily. MenG/UbiE family.

It carries out the reaction a 2-demethylmenaquinol + S-adenosyl-L-methionine = a menaquinol + S-adenosyl-L-homocysteine + H(+). The catalysed reaction is a 2-methoxy-6-(all-trans-polyprenyl)benzene-1,4-diol + S-adenosyl-L-methionine = a 5-methoxy-2-methyl-3-(all-trans-polyprenyl)benzene-1,4-diol + S-adenosyl-L-homocysteine + H(+). Its pathway is quinol/quinone metabolism; menaquinone biosynthesis; menaquinol from 1,4-dihydroxy-2-naphthoate: step 2/2. It participates in cofactor biosynthesis; ubiquinone biosynthesis. Its function is as follows. Methyltransferase required for the conversion of demethylmenaquinol (DMKH2) to menaquinol (MKH2) and the conversion of 2-polyprenyl-6-methoxy-1,4-benzoquinol (DDMQH2) to 2-polyprenyl-3-methyl-6-methoxy-1,4-benzoquinol (DMQH2). This chain is Ubiquinone/menaquinone biosynthesis C-methyltransferase UbiE, found in Coxiella burnetii (strain RSA 493 / Nine Mile phase I).